We begin with the raw amino-acid sequence, 288 residues long: Ribosomal protein L11 methyltransferase (288 aa).

Positions 141, 164, 186, and 227 each coordinate S-adenosyl-L-methionine.

It belongs to the methyltransferase superfamily. PrmA family.

It is found in the cytoplasm. The catalysed reaction is L-lysyl-[protein] + 3 S-adenosyl-L-methionine = N(6),N(6),N(6)-trimethyl-L-lysyl-[protein] + 3 S-adenosyl-L-homocysteine + 3 H(+). In terms of biological role, methylates ribosomal protein L11. This Myxococcus xanthus (strain DK1622) protein is Ribosomal protein L11 methyltransferase.